A 170-amino-acid chain; its full sequence is Photosystem I assembly protein Ycf3 (170 aa).

3 TPR repeats span residues 35–68, 72–105, and 120–153; these read AFTYYRDGMLAQSEGNYAEALQNYYEATRLEIDP, SYILYNIGLIHTSNGEHTKALEYYFRALERNPFL, and GEQAILQGDSEIAEAWFDQAAEYWKQAIALTPGN.

The protein belongs to the Ycf3 family.

The protein resides in the plastid. It is found in the chloroplast thylakoid membrane. Essential for the assembly of the photosystem I (PSI) complex. May act as a chaperone-like factor to guide the assembly of the PSI subunits. The chain is Photosystem I assembly protein Ycf3 from Oryza nivara (Indian wild rice).